Reading from the N-terminus, the 120-residue chain is Large ribosomal subunit protein uL18 (120 aa).

The tract at residues 1 to 22 (MKTTRKESLKRRHRRIRRKVSG) is disordered. The segment covering 8-20 (SLKRRHRRIRRKV) has biased composition (basic residues).

The protein belongs to the universal ribosomal protein uL18 family. Part of the 50S ribosomal subunit; part of the 5S rRNA/L5/L18/L25 subcomplex. Contacts the 5S and 23S rRNAs.

In terms of biological role, this is one of the proteins that bind and probably mediate the attachment of the 5S RNA into the large ribosomal subunit, where it forms part of the central protuberance. The protein is Large ribosomal subunit protein uL18 of Crocosphaera subtropica (strain ATCC 51142 / BH68) (Cyanothece sp. (strain ATCC 51142)).